Reading from the N-terminus, the 314-residue chain is 4-hydroxy-3-methylbut-2-enyl diphosphate reductase (314 aa).

Cysteine 12 contributes to the [4Fe-4S] cluster binding site. Residues histidine 43 and histidine 81 each contribute to the (2E)-4-hydroxy-3-methylbut-2-enyl diphosphate site. Histidine 43 and histidine 81 together coordinate dimethylallyl diphosphate. Histidine 43 and histidine 81 together coordinate isopentenyl diphosphate. Cysteine 103 contributes to the [4Fe-4S] cluster binding site. A (2E)-4-hydroxy-3-methylbut-2-enyl diphosphate-binding site is contributed by histidine 131. Histidine 131 contributes to the dimethylallyl diphosphate binding site. Histidine 131 lines the isopentenyl diphosphate pocket. The active-site Proton donor is glutamate 133. Position 170 (threonine 170) interacts with (2E)-4-hydroxy-3-methylbut-2-enyl diphosphate. Residue cysteine 198 coordinates [4Fe-4S] cluster. (2E)-4-hydroxy-3-methylbut-2-enyl diphosphate-binding residues include serine 226, asparagine 228, and serine 271. 3 residues coordinate dimethylallyl diphosphate: serine 226, asparagine 228, and serine 271. Positions 226, 228, and 271 each coordinate isopentenyl diphosphate.

This sequence belongs to the IspH family. Requires [4Fe-4S] cluster as cofactor.

It catalyses the reaction isopentenyl diphosphate + 2 oxidized [2Fe-2S]-[ferredoxin] + H2O = (2E)-4-hydroxy-3-methylbut-2-enyl diphosphate + 2 reduced [2Fe-2S]-[ferredoxin] + 2 H(+). It carries out the reaction dimethylallyl diphosphate + 2 oxidized [2Fe-2S]-[ferredoxin] + H2O = (2E)-4-hydroxy-3-methylbut-2-enyl diphosphate + 2 reduced [2Fe-2S]-[ferredoxin] + 2 H(+). It participates in isoprenoid biosynthesis; dimethylallyl diphosphate biosynthesis; dimethylallyl diphosphate from (2E)-4-hydroxy-3-methylbutenyl diphosphate: step 1/1. The protein operates within isoprenoid biosynthesis; isopentenyl diphosphate biosynthesis via DXP pathway; isopentenyl diphosphate from 1-deoxy-D-xylulose 5-phosphate: step 6/6. Its function is as follows. Catalyzes the conversion of 1-hydroxy-2-methyl-2-(E)-butenyl 4-diphosphate (HMBPP) into a mixture of isopentenyl diphosphate (IPP) and dimethylallyl diphosphate (DMAPP). Acts in the terminal step of the DOXP/MEP pathway for isoprenoid precursor biosynthesis. The sequence is that of 4-hydroxy-3-methylbut-2-enyl diphosphate reductase from Bacillus pumilus (strain SAFR-032).